The chain runs to 935 residues: C-1-tetrahydrofolate synthase, cytoplasmic (935 aa).

Position 1 is an N-acetylmethionine (Met-1). The segment at 2–291 is methylenetetrahydrofolate dehydrogenase and methenyltetrahydrofolate cyclohydrolase (D/C) domain; that stretch reads APAEILNGRE…MLMQSTVESA (290 aa). Substrate-binding positions include 52 to 56 and 99 to 101; these read YINVK and VQL. Lys-56 is an active-site residue. Residues 172–174 and Ser-197 contribute to the NADP(+) site; that span reads GRS. 272 to 276 contributes to the substrate binding site; the sequence is PGGVG. The formyltetrahydrofolate synthetase domain stretch occupies residues 310–935; the sequence is LNLKTPDPSD…PETQQVNGLF (626 aa). A Phosphoserine modification is found at Ser-318. An ATP-binding site is contributed by 380–387; sequence TPLGEGKS. 2 positions are modified to phosphoserine: Ser-413 and Ser-490.

In the N-terminal section; belongs to the tetrahydrofolate dehydrogenase/cyclohydrolase family. The protein in the C-terminal section; belongs to the formate--tetrahydrofolate ligase family. Homodimer.

Its subcellular location is the cytoplasm. The enzyme catalyses (6R)-5,10-methylene-5,6,7,8-tetrahydrofolate + NADP(+) = (6R)-5,10-methenyltetrahydrofolate + NADPH. The catalysed reaction is (6R)-5,10-methenyltetrahydrofolate + H2O = (6R)-10-formyltetrahydrofolate + H(+). It catalyses the reaction (6S)-5,6,7,8-tetrahydrofolate + formate + ATP = (6R)-10-formyltetrahydrofolate + ADP + phosphate. The protein operates within one-carbon metabolism; tetrahydrofolate interconversion. Trifunctional enzyme that catalyzes the interconversion of three forms of one-carbon-substituted tetrahydrofolate: (6R)-5,10-methylene-5,6,7,8-tetrahydrofolate, 5,10-methenyltetrahydrofolate and (6S)-10-formyltetrahydrofolate. These derivatives of tetrahydrofolate are differentially required in nucleotide and amino acid biosynthesis, (6S)-10-formyltetrahydrofolate being required for purine biosynthesis while (6R)-5,10-methylene-5,6,7,8-tetrahydrofolate is used for serine and methionine biosynthesis for instance. The chain is C-1-tetrahydrofolate synthase, cytoplasmic (MTHFD1) from Pongo abelii (Sumatran orangutan).